Consider the following 137-residue polypeptide: Phosphoribosyl-AMP cyclohydrolase (137 aa).

Residue aspartate 83 coordinates Mg(2+). Cysteine 84 provides a ligand contact to Zn(2+). Mg(2+) contacts are provided by aspartate 85 and aspartate 87. 2 residues coordinate Zn(2+): cysteine 101 and cysteine 108.

Belongs to the PRA-CH family. In terms of assembly, homodimer. It depends on Mg(2+) as a cofactor. The cofactor is Zn(2+).

It localises to the cytoplasm. The enzyme catalyses 1-(5-phospho-beta-D-ribosyl)-5'-AMP + H2O = 1-(5-phospho-beta-D-ribosyl)-5-[(5-phospho-beta-D-ribosylamino)methylideneamino]imidazole-4-carboxamide. It participates in amino-acid biosynthesis; L-histidine biosynthesis; L-histidine from 5-phospho-alpha-D-ribose 1-diphosphate: step 3/9. Its function is as follows. Catalyzes the hydrolysis of the adenine ring of phosphoribosyl-AMP. The chain is Phosphoribosyl-AMP cyclohydrolase from Burkholderia mallei (strain ATCC 23344).